The chain runs to 342 residues: Cellular tumor antigen p53 (342 aa).

Residues 1-35 (MEEADLTLPLSQDTFHDLWNNVFLSTENESLPPPE) form a transcription activation (acidic) region. Residues 68 to 255 (NYAGEHGFNL…KTEEGNLEKS (188 aa)) mediate DNA binding. Zn(2+)-binding residues include Cys-142, His-145, Cys-201, and Cys-205. Positions 236 to 243 (RVCACPGR) are interaction with DNA. Over residues 244 to 256 (DRKTEEGNLEKSG) the composition is skewed to basic and acidic residues. Positions 244–287 (DRKTEEGNLEKSGTKQTKKRKSAPAPDTSTAKKSKSASSGEDED) are disordered. The Bipartite nuclear localization signal motif lies at 261–278 (KKRKSAPAPDTSTAKKSK). Low complexity predominate over residues 271 to 282 (TSTAKKSKSASS). Residues 288 to 317 (KEIYTLSIRGRNRYLWFKSLNDGLELMDKT) form an oligomerization region. The Nuclear export signal motif lies at 302 to 313 (LWFKSLNDGLEL). The interval 318-342 (GPKIKQEIPAPSSGKRLLKGGSDSD) is disordered. Positions 319–336 (PKIKQEIPAPSSGKRLLK) are basic (repression of DNA-binding).

The protein belongs to the p53 family. In terms of assembly, binds DNA as a homotetramer. Zn(2+) is required as a cofactor.

Its subcellular location is the cytoplasm. The protein resides in the nucleus. Its function is as follows. Multifunctional transcription factor that induces cell cycle arrest, DNA repair or apoptosis upon binding to its target DNA sequence. Acts as a tumor suppressor in many tumor types; induces growth arrest or apoptosis depending on the physiological circumstances and cell type. Negatively regulates cell division by controlling expression of a set of genes required for this process. One of the activated genes is an inhibitor of cyclin-dependent kinases. Apoptosis induction seems to be mediated either by stimulation of BAX and FAS antigen expression, or by repression of Bcl-2 expression. The chain is Cellular tumor antigen p53 (tp53) from Xiphophorus maculatus (Southern platyfish).